The following is a 161-amino-acid chain: TM2 domain-containing protein DDB_G0278163 (161 aa).

The Cytoplasmic segment spans residues 1–24; sequence MGHHHHHHGGSGHHHHHHHHGSGH. The chain crosses the membrane as a helical span at residues 25 to 45; sequence YGGGAVLVTPIVTPVPVVYGS. Residues 46–54 are Extracellular-facing; it reads RSSSYCPKS. A TM2 domain is found at 52-100; the sequence is PKSMTVAYVLWFFFGILGFHRLYLGRVGTFFLYFFTAGVFGLGWLFDAF. The helical transmembrane segment at 55–75 threads the bilayer; the sequence is MTVAYVLWFFFGILGFHRLYL. The Cytoplasmic segment spans residues 76–80; sequence GRVGT. A helical membrane pass occupies residues 81-101; sequence FFLYFFTAGVFGLGWLFDAFY. Over 102–161 the chain is Extracellular; that stretch reads THKMVKHYNECEFTKSCVGQSPPATIPIYQSEGAYPTYQQVPQQPPQFYQPQQQQPQYQP. Residues 139–161 are disordered; the sequence is YQQVPQQPPQFYQPQQQQPQYQP.

The protein belongs to the TM2 family.

It localises to the membrane. This Dictyostelium discoideum (Social amoeba) protein is TM2 domain-containing protein DDB_G0278163.